Reading from the N-terminus, the 112-residue chain is M-myrmeciitoxin-Mp1 (112 aa).

Residues 1–26 (MKLSCLLLTLTIIFVLTIVHAPNVEA) form the signal peptide. Positions 27 to 56 (KDLADPESEAVGFADAFGEADAVGEADPNA) are excised as a propeptide. Residues 57–78 (GLGSVFGRLARILGRVIPKVAK) are critical for cytotoxic activity. The segment at 93–106 (KEAIPMAVEMAKSQ) is igE-binding determinant.

Belongs to the formicidae venom precursor-01 superfamily. Ant pilosulin family. As to expression, expressed by the venom gland.

It localises to the secreted. Functionally, has strong cytotoxic and hemolytic activities. Is more potent against mononuclear leukocytes than against granulocytes. The synthesized peptide 57-76 shows a potent and broad spectrum antimicrobial activity against both Gram-positive and Gram-negative bacteria, and also against the fungus C.albicans. Adopts an alpha-helical structure. This is M-myrmeciitoxin-Mp1 from Myrmecia pilosula (Jack jumper ant).